The chain runs to 161 residues: uncharacterized protein (161 aa).

This is an uncharacterized protein from Lepidoptera (butterflies and moths).